Here is a 509-residue protein sequence, read N- to C-terminus: DNA primase large subunit (509 aa).

Residues L253–K270 form an interdomain linker region. The segment at G266–S509 is interacts with PRIM1. Residues C287, C367, C384, and C424 each contribute to the [4Fe-4S] cluster site. An RNA:DNA duplex-binding region spans residues H300–N442. A disordered region spans residues I461–A486. T470 carries the post-translational modification Phosphothreonine.

The protein belongs to the eukaryotic-type primase large subunit family. As to quaternary structure, heterodimer of a catalytic subunit PRIM1 and a regulatory subunit PRIM2, also known as the DNA primase complex. Interacts via (C-terminus) with PRIM1. Component of the alpha DNA polymerase complex (also known as the alpha DNA polymerase-primase complex) consisting of four subunits: the catalytic subunit POLA1, the regulatory subunit POLA2, and the primase complex subunits PRIM1 and PRIM2 respectively. Within the complex, POLA1 directly interacts with PRIM2. It depends on [4Fe-4S] cluster as a cofactor.

Its function is as follows. Regulatory subunit of the DNA primase complex and component of the DNA polymerase alpha complex (also known as the alpha DNA polymerase-primase complex) which play an essential role in the initiation of DNA synthesis. During the S phase of the cell cycle, the DNA polymerase alpha complex (composed of a catalytic subunit POLA1, an accessory subunit POLA2 and two primase subunits, the catalytic subunit PRIM1 and the regulatory subunit PRIM2) is recruited to DNA at the replicative forks via direct interactions with MCM10 and WDHD1. The primase subunit of the polymerase alpha complex initiates DNA synthesis by oligomerising short RNA primers on both leading and lagging strands. These primers are initially extended by the polymerase alpha catalytic subunit and subsequently transferred to polymerase delta and polymerase epsilon for processive synthesis on the lagging and leading strand, respectively. In the primase complex, both subunits are necessary for the initial di-nucleotide formation, but the extension of the primer depends only on the catalytic subunit. Binds RNA:DNA duplex and coordinates the catalytic activities of PRIM1 and POLA2 during primase-to-polymerase switch. The polypeptide is DNA primase large subunit (PRIM2) (Homo sapiens (Human)).